A 173-amino-acid polypeptide reads, in one-letter code: MDIAIQHPWFKRALGPFYPSRLFDQFFGEGLFEYDLLPFLSSTISPYYRQSLFRTVLDSGISEVRSDRDKFVIYLDVKHFSPEDLTVKVLEDFVEIHGKHNERQDDHGYISREFHRRYRLPSNVDQSALSCSLSADGMLTFSGPKVPSGMDAGHSERAIPVSREEKPSSAPSS.

N-acetylmethionine is present on Met1. The interval 1–63 is required for complex formation with BFSP1 and BFSP2; it reads MDIAIQHPWF…RTVLDSGISE (63 aa). At Gln6 the chain carries Deamidated glutamine; partial. At Ser45 the chain carries Phosphoserine. Gln50 carries the post-translational modification Deamidated glutamine; partial. A sHSP domain is found at 52-162; that stretch reads LFRTVLDSGI…GHSERAIPVS (111 aa). An N6-acetyllysine mark is found at Lys70 and Lys99. His100 contacts Zn(2+). Asn101 is modified (deamidated asparagine; partial). Residues Glu102 and His107 each coordinate Zn(2+). Ser122 carries the post-translational modification Phosphoserine. Asn123 is modified (deamidated asparagine; partial). A disordered region spans residues 144–173; it reads PKVPSGMDAGHSERAIPVSREEKPSSAPSS. Over residues 153-167 the composition is skewed to basic and acidic residues; sequence GHSERAIPVSREEKP. A Zn(2+)-binding site is contributed by His154. Ser162 carries an O-linked (GlcNAc) serine glycan.

Belongs to the small heat shock protein (HSP20) family. Heteromer composed of three CRYAA and one CRYAB subunits. Inter-subunit bridging via zinc ions enhances stability, which is crucial as there is no protein turn over in the lens. Can also form homodimers and homotetramers (dimers of dimers) which serve as the building blocks of homooligomers. Within homooligomers, the zinc-binding motif is created from residues of 3 different molecules. His-100 and Glu-102 from one molecule are ligands of the zinc ion, and His-107 and His-154 residues from additional molecules complete the site with tetrahedral coordination geometry. Part of a complex required for lens intermediate filament formation composed of BFSP1, BFSP2 and CRYAA. Post-translationally, acetylation at Lys-70 may increase chaperone activity. In terms of processing, undergoes age-dependent proteolytical cleavage at the C-terminus.

It localises to the cytoplasm. The protein resides in the nucleus. Contributes to the transparency and refractive index of the lens. Acts as a chaperone, preventing aggregation of various proteins under a wide range of stress conditions. Required for the correct formation of lens intermediate filaments as part of a complex composed of BFSP1, BFSP2 and CRYAA. The sequence is that of Alpha-crystallin A chain (CRYAA) from Melursus ursinus (Sloth bear).